We begin with the raw amino-acid sequence, 191 residues long: dCTP deaminase, dUMP-forming (191 aa).

DCTP contacts are provided by residues 101 to 106 (KSSLGR), D119, 127 to 129 (TLE), Q148, Y162, and Q174. The active-site Proton donor/acceptor is E129. Residues 163-191 (GSPVYGSRYQGQRGPTPSRSWQNFHRTKI) are disordered. Polar residues predominate over residues 171–191 (YQGQRGPTPSRSWQNFHRTKI).

It belongs to the dCTP deaminase family. As to quaternary structure, homotrimer.

The catalysed reaction is dCTP + 2 H2O = dUMP + NH4(+) + diphosphate. It functions in the pathway pyrimidine metabolism; dUMP biosynthesis; dUMP from dCTP: step 1/1. Functionally, bifunctional enzyme that catalyzes both the deamination of dCTP to dUTP and the hydrolysis of dUTP to dUMP without releasing the toxic dUTP intermediate. The sequence is that of dCTP deaminase, dUMP-forming from Acidothermus cellulolyticus (strain ATCC 43068 / DSM 8971 / 11B).